Reading from the N-terminus, the 370-residue chain is Chaperone protein DnaJ (370 aa).

The region spanning 4 to 68 is the J domain; that stretch reads DYYQVLGVSK…QKRAAYDRFG (65 aa). The segment at 133–211 adopts a CR-type zinc-finger fold; the sequence is GIEKNISFSS…CHGMGRYHKQ (79 aa). Positions 146, 149, 163, 166, 185, 188, 199, and 202 each coordinate Zn(2+). CXXCXGXG motif repeat units follow at residues 146–153, 163–170, 185–192, and 199–206; these read CDTCHGTG, CDACGGVG, CHKCQGNG, and CKKCHGMG.

Belongs to the DnaJ family. In terms of assembly, homodimer. Zn(2+) is required as a cofactor.

Its subcellular location is the cytoplasm. Functionally, participates actively in the response to hyperosmotic and heat shock by preventing the aggregation of stress-denatured proteins and by disaggregating proteins, also in an autonomous, DnaK-independent fashion. Unfolded proteins bind initially to DnaJ; upon interaction with the DnaJ-bound protein, DnaK hydrolyzes its bound ATP, resulting in the formation of a stable complex. GrpE releases ADP from DnaK; ATP binding to DnaK triggers the release of the substrate protein, thus completing the reaction cycle. Several rounds of ATP-dependent interactions between DnaJ, DnaK and GrpE are required for fully efficient folding. Also involved, together with DnaK and GrpE, in the DNA replication of plasmids through activation of initiation proteins. The sequence is that of Chaperone protein DnaJ from Rickettsia prowazekii (strain Madrid E).